A 155-amino-acid chain; its full sequence is Large ribosomal subunit protein uL30 (155 aa).

The protein belongs to the universal ribosomal protein uL30 family. In terms of assembly, part of the 50S ribosomal subunit.

This chain is Large ribosomal subunit protein uL30, found in Nitrosopumilus maritimus (strain SCM1).